The chain runs to 309 residues: Malate dehydrogenase (309 aa).

NAD(+)-binding positions include 9–14 (GAGFVG) and D33. Substrate-binding residues include R82 and R88. Residues N95 and 118–120 (VNN) each bind NAD(+). 2 residues coordinate substrate: N120 and R151. H175 functions as the Proton acceptor in the catalytic mechanism.

This sequence belongs to the LDH/MDH superfamily. MDH type 3 family.

It catalyses the reaction (S)-malate + NAD(+) = oxaloacetate + NADH + H(+). In terms of biological role, catalyzes the reversible oxidation of malate to oxaloacetate. The sequence is that of Malate dehydrogenase from Chloroflexus aggregans (strain MD-66 / DSM 9485).